The primary structure comprises 254 residues: Photosystem II 22 kDa protein 2, chloroplastic (254 aa).

The N-terminal 38 residues, 1-38 (MALQQSMAMPMMVVSDLGTAPRSSPMVQLQRMKKHLVV), are a transit peptide targeting the chloroplast. Repeat copies occupy residues 42 to 148 (FKSR…FVDD) and 149 to 253 (ATGL…DNDD). 4 consecutive transmembrane segments (helical) span residues 86-106 (VAMLGFAASLLGEAVTGKGIL), 120-140 (AEPLLLFFILFTLLGAIGALG), 184-204 (LFVGRLAQLGIAFSLIGEIIT), and 219-239 (PINEIEPLLLFNILFFFFAAI).

Belongs to the ELIP/psbS family.

The protein localises to the plastid. The protein resides in the chloroplast thylakoid membrane. Involved in high light-mediated energy-dependent nonphotochemical quenching (NPQ, qE) and thermal dissipation (TD) thus regulating energy conversion in photosystem II and protecting from photoinhibition. Also seems to regulate quantum yield of electron transport in fluctuating light conditions. This chain is Photosystem II 22 kDa protein 2, chloroplastic, found in Oryza sativa subsp. japonica (Rice).